Consider the following 57-residue polypeptide: Preprotein translocase subunit SecG (57 aa).

At methionine 1–threonine 33 the chain is on the cytoplasmic side. A helical transmembrane segment spans residues proline 34 to histidine 55. Over proline 56–leucine 57 the chain is Extracellular.

It belongs to the SEC61-beta family. In terms of assembly, component of the protein translocase complex. Heterotrimer consisting of alpha (SecY), beta (SecG) and gamma (SecE) subunits. Can form oligomers of the heterotrimer.

The protein localises to the cell membrane. Functionally, involved in protein export. The function of the beta subunit is unknown, but it may be involved in stabilization of the trimeric complex. This Pyrobaculum neutrophilum (strain DSM 2338 / JCM 9278 / NBRC 100436 / V24Sta) (Thermoproteus neutrophilus) protein is Preprotein translocase subunit SecG.